Here is a 183-residue protein sequence, read N- to C-terminus: uncharacterized protein (183 aa).

A Macro domain is found at 1–182 (MFRVVHGDIT…VALKVLERDE (182 aa)).

This is an uncharacterized protein from Pyrococcus abyssi (strain GE5 / Orsay).